A 601-amino-acid polypeptide reads, in one-letter code: Protein FAM13C (601 aa).

Disordered stretches follow at residues 82-134 and 192-238; these read SMGN…PQSS and DGQV…EDLQ. Over residues 98 to 111 the composition is skewed to basic and acidic residues; it reads ESGRNHGESQETEH. Serine 130 carries the post-translational modification Phosphoserine. Positions 200-217 are enriched in low complexity; it reads DPAPASTQSAPADSADPA. Phosphoserine is present on serine 258. Disordered regions lie at residues 268-304, 327-352, and 366-485; these read QRFNLDPESAPSPPSSQQFMMPRSSSRCGSGDGKEPQ, FEQEKKYRPSHGDKTSNPEVLKWMND, and KLSE…DPVS. Low complexity predominate over residues 282-294; it reads SSQQFMMPRSSSR. Residues 327 to 342 are compositionally biased toward basic and acidic residues; it reads FEQEKKYRPSHGDKTS. A phosphoserine mark is found at serine 405 and serine 406. Positions 415-446 are enriched in basic and acidic residues; sequence VPEKREQTPPQDDGKGTKQDKNLIKPLYDRCR. The span at 462–471 shows a compositional bias: acidic residues; that stretch reads QEEEDSDEDC.

This sequence belongs to the FAM13 family.

The polypeptide is Protein FAM13C (Fam13c) (Mus musculus (Mouse)).